Reading from the N-terminus, the 126-residue chain is DNA-directed RNA polymerase subunit omega (126 aa).

The protein belongs to the RNA polymerase subunit omega family. In terms of assembly, the RNAP catalytic core consists of 2 alpha, 1 beta, 1 beta' and 1 omega subunit. When a sigma factor is associated with the core the holoenzyme is formed, which can initiate transcription.

It catalyses the reaction RNA(n) + a ribonucleoside 5'-triphosphate = RNA(n+1) + diphosphate. Promotes RNA polymerase assembly. Latches the N- and C-terminal regions of the beta' subunit thereby facilitating its interaction with the beta and alpha subunits. This is DNA-directed RNA polymerase subunit omega from Rickettsia felis (strain ATCC VR-1525 / URRWXCal2) (Rickettsia azadi).